The chain runs to 125 residues: Large ribosomal subunit protein bL12 (125 aa).

The protein belongs to the bacterial ribosomal protein bL12 family. In terms of assembly, homodimer. Part of the ribosomal stalk of the 50S ribosomal subunit. Forms a multimeric L10(L12)X complex, where L10 forms an elongated spine to which 2 to 4 L12 dimers bind in a sequential fashion. Binds GTP-bound translation factors.

In terms of biological role, forms part of the ribosomal stalk which helps the ribosome interact with GTP-bound translation factors. Is thus essential for accurate translation. The protein is Large ribosomal subunit protein bL12 of Rhizobium leguminosarum bv. trifolii (strain WSM2304).